The sequence spans 828 residues: Periplasmic nitrate reductase (828 aa).

A signal peptide (tat-type signal) is located at residues 1-31; that stretch reads MKLSRRSFMKANAVAAAAAAAGLSVPGVARA. The 57-residue stretch at 39-95 folds into the 4Fe-4S Mo/W bis-MGD-type domain; sequence IKWDKAPCRFCGTGCGVLVGTQQGRIVACQGDPDAPVNRGLNCIKGYFLPKIMYGKD. Residues cysteine 46, cysteine 49, cysteine 53, and cysteine 81 each coordinate [4Fe-4S] cluster. Mo-bis(molybdopterin guanine dinucleotide)-binding positions include lysine 83, glutamine 150, asparagine 175, cysteine 179, 212 to 219, 243 to 247, 262 to 264, methionine 372, glutamine 376, asparagine 482, 508 to 509, lysine 531, aspartate 558, and 718 to 727; these read WGSNMAEM, STFQH, QSD, SD, and TGRVLEHWHT. Phenylalanine 794 lines the substrate pocket. Mo-bis(molybdopterin guanine dinucleotide) is bound by residues asparagine 802 and lysine 819.

The protein belongs to the prokaryotic molybdopterin-containing oxidoreductase family. NasA/NapA/NarB subfamily. Component of the periplasmic nitrate reductase NapAB complex composed of NapA and NapB. It depends on [4Fe-4S] cluster as a cofactor. The cofactor is Mo-bis(molybdopterin guanine dinucleotide). Post-translationally, predicted to be exported by the Tat system. The position of the signal peptide cleavage has not been experimentally proven.

It localises to the periplasm. It catalyses the reaction 2 Fe(II)-[cytochrome] + nitrate + 2 H(+) = 2 Fe(III)-[cytochrome] + nitrite + H2O. Its function is as follows. Catalytic subunit of the periplasmic nitrate reductase complex NapAB. Receives electrons from NapB and catalyzes the reduction of nitrate to nitrite. In Citrobacter koseri (strain ATCC BAA-895 / CDC 4225-83 / SGSC4696), this protein is Periplasmic nitrate reductase.